We begin with the raw amino-acid sequence, 677 residues long: Methionine--tRNA ligase (677 aa).

The short motif at 15 to 25 (PYANGSIHLGH) is the 'HIGH' region element. Zn(2+) is bound by residues cysteine 146, cysteine 149, cysteine 159, and cysteine 162. The 'KMSKS' region motif lies at 333–337 (KMSKS). An ATP-binding site is contributed by lysine 336. The 103-residue stretch at 575–677 (DFAKVDLRVA…AGAKPGHQVK (103 aa)) folds into the tRNA-binding domain.

It belongs to the class-I aminoacyl-tRNA synthetase family. MetG type 1 subfamily. Homodimer. It depends on Zn(2+) as a cofactor.

It localises to the cytoplasm. It catalyses the reaction tRNA(Met) + L-methionine + ATP = L-methionyl-tRNA(Met) + AMP + diphosphate. Its function is as follows. Is required not only for elongation of protein synthesis but also for the initiation of all mRNA translation through initiator tRNA(fMet) aminoacylation. This is Methionine--tRNA ligase from Shigella sonnei (strain Ss046).